The primary structure comprises 1555 residues: MGCKGDASGACAAGALPVTGVCYKMGVLVVLTVLWLFSSVKADSKAITTSLTTKWFSTPLLLEASEFLAEDSQEKFWNFVEASQNIGSSDHDGTDYSYYHAILEAAFQFLSPLQQNLFKFCLSLRSYSATIQAFQQIAADEPPPEGCNSFFSVHGKKTCESDTLEALLLTASERPKPLLFKGDHRYPSSNPESPVVIFYSEIGSEEFSNFHRQLISKSNAGKINYVFRHYIFNPRKEPVYLSGYGVELAIKSTEYKAKDDTQVKGTEVNTTVIGENDPIDEVQGFLFGKLRDLHPDLEGQLKELRKHLVESTNEMAPLKVWQLQDLSFQTAARILASPVELALVVMKDLSQNFPTKARAITKTAVSSELRTEVEENQKYFKGTLGLQPGDSALFINGLHMDLDTQDIFSLFDVLRNEARVMEGLHRLGIEGLSLHNVLKLNIQPSEADYAVDIRSPAISWVNNLEVDSRYNSWPSSLQELLRPTFPGVIRQIRKNLHNMVFIVDPAHETTAELMNTAEMFLSNHIPLRIGFIFVVNDSEDVDGMQDAGVAVLRAYNYVAQEVDDYHAFQTLTHIYNKVRTGEKVKVEHVVSVLEKKYPYVEVNSILGIDSAYDRNRKEARGYYEQTGVGPLPVVLFNGMPFEREQLDPDELETITMHKILETTTFFQRAVYLGELPHDQDVVEYIMNQPNVVPRINSRILTAERDYLDLTASNNFFVDDYARFTILDSQGKTAAVANSMNYLTKKGMSSKEIYDDSFIRPVTFWIVGDFDSPSGRQLLYDAIKHQKSSNNVRISMINNPAKEISYENTQISRAIWAALQTQTSNAAKNFITKMAKEGAAEALAAGADIAEFSVGGMDFSLFKEVFESSKMDFILSHAVYCRDVLKLKKGQRAVISNGRIIGPLEDSELFNQDDFHLLENIILKTSGQKIKSHIQQLRVEEDVASDLVMKVDALLSAQPKGDPRIEYQFFEDRHSAIKLRPKEGETYFDVVAVVDPVTREAQRLAPLLLVLAQLINMNLRVFMNCQSKLSDMPLKSFYRYVLEPEISFTSDNSFAKGPIAKFLDMPQSPLFTLNLNTPESWMVESVRTPYDLDNIYLEEVDSVVAAEYELEYLLLEGHCYDITTGQPPRGLQFTLGTSANPVIVDTIVMANLGYFQLKANPGAWILRLRKGRSEDIYRIYSHDGTDSPPDADEVVIVLNNFKSKIIKVKVQKKADMVNEDLLSDGTSENESGFWDSFKWGFTGQKTEEVKQDKDDIINIFSVASGHLYERFLRIMMLSVLKNTKTPVKFWFLKNYLSPTFKEFIPYMANEYNFQYELVQYKWPRWLHQQTEKQRIIWGYKILFLDVLFPLVVDKFLFVDADQIVRTDLKELRDFNLDGAPYGYTPFCDSRREMDGYRFWKSGYWASHLAGRKYHISALYVVDLKKFRKIAAGDRLRGQYQGLSQDPNSLSNLDQDLPNNMIHQVPIKSLPQEWLWCETWCDDASKKRAKTIDLCNNPMTKEPKLEAAVRIVPEWQDYDQEIKQLQIRFQKEKETGALYKEKTKEPSREGPQKREEL.

A signal peptide spans 1–42; it reads MGCKGDASGACAAGALPVTGVCYKMGVLVVLTVLWLFSSVKA. N-linked (GlcNAc...) asparagine glycans are attached at residues N536 and N1228. Residues 1244–1555 form a glucosyltransferase region; sequence KTEEVKQDKD…REGPQKREEL (312 aa). Position 1277 is a phosphoserine (S1277). The disordered stretch occupies residues 1534-1555; sequence GALYKEKTKEPSREGPQKREEL. Positions 1552–1555 match the Prevents secretion from ER motif; it reads REEL.

Belongs to the glycosyltransferase 8 family. In terms of assembly, monomer as well as in a tight complex with SELENOF. Interacts with METTL23. Part of a large chaperone multiprotein complex comprising DNAJB11, HSP90B1, HSPA5, HYOU, PDIA2, PDIA4, PDIA6, PPIB, SDF2L1, UGGT1 and very small amounts of ERP29, but not, or at very low levels, CALR nor CANX. The cofactor is Ca(2+). Mn(2+) is required as a cofactor. In terms of tissue distribution, higher levels in pancreas, skeletal muscle, kidney, and brain. Low levels in lung and heart.

The protein resides in the endoplasmic reticulum lumen. The protein localises to the endoplasmic reticulum-Golgi intermediate compartment. It catalyses the reaction N(4)-(alpha-D-Man-(1-&gt;2)-alpha-D-Man-(1-&gt;2)-alpha-D-Man-(1-&gt;3)-[alpha-D-Man-(1-&gt;2)-alpha-D-Man-(1-&gt;3)-[alpha-D-Man-(1-&gt;2)-alpha-D-Man-(1-&gt;6)]-alpha-D-Man-(1-&gt;6)]-beta-D-Man-(1-&gt;4)-beta-D-GlcNAc-(1-&gt;4)-beta-D-GlcNAc)-L-asparaginyl-[protein] (N-glucan mannose isomer 9A1,2,3B1,2,3) + UDP-alpha-D-glucose = N(4)-(alpha-D-Glc-(1-&gt;3)-alpha-D-Man-(1-&gt;2)-alpha-D-Man-(1-&gt;2)-alpha-D-Man-(1-&gt;3)-[alpha-D-Man-(1-&gt;2)-alpha-D-Man-(1-&gt;3)-[alpha-D-Man-(1-&gt;2)-alpha-D-Man-(1-&gt;6)]-alpha-D-Man-(1-&gt;6)]-beta-D-Man-(1-&gt;4)-beta-D-GlcNAc-(1-&gt;4)-beta-D-GlcNAc)-L-asparaginyl-[protein] + UDP + H(+). It participates in protein modification; protein glycosylation. Its activity is regulated as follows. Catalytic activity is enhanced by complex formation with SELENOF. Functionally, recognizes glycoproteins with minor folding defects. Reglucosylates single N-glycans near the misfolded part of the protein, thus providing quality control for protein folding in the endoplasmic reticulum. Reglucosylated proteins are recognized by calreticulin for recycling to the endoplasmic reticulum and refolding or degradation. This chain is UDP-glucose:glycoprotein glucosyltransferase 1 (UGGT1), found in Homo sapiens (Human).